The primary structure comprises 52 residues: Phospholamban (52 aa).

An N-acetylmethionine modification is found at Met-1. The Cytoplasmic segment spans residues 1–31; the sequence is MEKVQYITRSALRRASTLEVNPQARQRLQEL. Phosphoserine; by PKA is present on Ser-16. Thr-17 is subject to Phosphothreonine; by CaMK. A helical transmembrane segment spans residues 32–52; sequence FVNFCLILICLLLICIIVMLL.

It belongs to the phospholamban family. As to quaternary structure, homopentamer. In terms of processing, phosphorylated in response to beta-adrenergic stimulation. Phosphorylation by PKA abolishes the inhibition of ATP2A2-mediated calcium uptake. In terms of tissue distribution, heart.

Its subcellular location is the endoplasmic reticulum membrane. It localises to the sarcoplasmic reticulum membrane. The protein localises to the mitochondrion membrane. It is found in the membrane. In terms of biological role, reversibly inhibits the activity of ATP2A2/SERCA2 in cardiac sarcoplasmic reticulum by decreasing the apparent affinity of the ATPase for Ca(2+). Binds preferentially to the ATP-bound E1 conformational form of ATP2A2 which predominates at low Ca(2+) concentrations during the diastolic phase of the cardiac cycle. Inhibits ATP2A2 Ca(2+) affinity by disrupting its allosteric activation by ATP. Modulates the contractility of the heart muscle in response to physiological stimuli via its effects on ATP2A2. Modulates calcium re-uptake during muscle relaxation and plays an important role in calcium homeostasis in the heart muscle. The degree of ATP2A2 inhibition depends on the oligomeric state of PLN. ATP2A2 inhibition is alleviated by PLN phosphorylation. This is Phospholamban (PLN) from Gallus gallus (Chicken).